An 80-amino-acid chain; its full sequence is Putative DNA-directed RNA polymerase subunit omega (80 aa).

Belongs to the RNA polymerase subunit omega family.

It localises to the plastid. It is found in the chloroplast. The catalysed reaction is RNA(n) + a ribonucleoside 5'-triphosphate = RNA(n+1) + diphosphate. Its function is as follows. May be involved in RNA polymerase activity. This chain is Putative DNA-directed RNA polymerase subunit omega, found in Gracilaria tenuistipitata var. liui (Red alga).